The chain runs to 324 residues: NADH-ubiquinone oxidoreductase chain 1 (324 aa).

8 helical membrane-spanning segments follow: residues 9–29 (LINP…LTLI), 75–95 (FLFL…WAPM), 106–126 (LGIL…LGSG), 146–166 (ISYE…SGGY), 177–197 (SIWL…STLA), 228–248 (LFFL…AVLF), 259–279 (ELTT…FLWV), and 299–319 (FLPL…ALAG).

This sequence belongs to the complex I subunit 1 family.

It localises to the mitochondrion inner membrane. It catalyses the reaction a ubiquinone + NADH + 5 H(+)(in) = a ubiquinol + NAD(+) + 4 H(+)(out). Core subunit of the mitochondrial membrane respiratory chain NADH dehydrogenase (Complex I) that is believed to belong to the minimal assembly required for catalysis. Complex I functions in the transfer of electrons from NADH to the respiratory chain. The immediate electron acceptor for the enzyme is believed to be ubiquinone. The chain is NADH-ubiquinone oxidoreductase chain 1 (MT-ND1) from Carassius auratus (Goldfish).